The sequence spans 611 residues: MSGEKKEYPKEHIDLYQQIKWNGWGDTRKFLHQLKPSGTIAMTTPEVSSVPLPSLRGFIKKELTLPGEEDKPFVLDETPALQIENIHVDPPKQYPEFVRELKAFFLPDQLKDDKLARITHTFGKSLRDLIRVRIGQVKNAPDLIVLPHSHEEVERLVQLAHKYNVVIIPMGGGSNIVGAIEPVSNERFTVSIDMRRMNKVLWVDRREMTACIQVGIMGPELEKQLHKQGVSLGHDPDSFEFSTLGGWLATCSSGHQSDKYGDIEDMAVSFRTVTPTGTLELRNGARSGAGINYKHIILGSEGTLGIITEAVMKVHAVPQAVEYYGFLFPTFAHAVSALQQIRSSEVIPTMIRVYDPEETQLSFAWKPSKGAVSEFTSAMVKKYLHYIRSFDFKNVCLSIIGFEGPKKVVDFHRTSVFDILSKNAAFGLGSAPGKTWAEKRYDLPYIRDFLLDHNMWVDVAETTVSYANLQTLWKDAKQTFVKHFKDQGIPAWICAHISHTYTNGVCLYFIFASKQNENKDMAQYIEAKKLMTDIIFKYGGSLSHHHGVGYEHVPWMTRYATRGWINVYRSLKETIDPKDICNPRKLIPTIKEENNKEPFLFDVVNVKYPKL.

The FAD-binding PCMH-type domain maps to 137 to 317 (VKNAPDLIVL…TEAVMKVHAV (181 aa)). FAD-binding positions include 169–175 (PMGGGSN), 237–243 (DSFEFST), 250–255 (TCSSGH), and 301–307 (EGTLGII). Residue Arg447 coordinates substrate. The active-site Proton donor/acceptor is the Tyr508. Residues 544 to 546 (HHH) form an important for enzyme activity region. The Microbody targeting signal motif lies at 609-611 (PKL).

The protein belongs to the FAD-binding oxidoreductase/transferase type 4 family. Homodimer. It depends on FAD as a cofactor.

The protein localises to the peroxisome. The catalysed reaction is a long chain fatty alcohol + a 1-acylglycerone 3-phosphate = a 1-O-alkylglycerone 3-phosphate + a long-chain fatty acid + H(+). It participates in glycerolipid metabolism; ether lipid biosynthesis. Catalyzes the exchange of an acyl for a long-chain alkyl group and the formation of the ether bond in the biosynthesis of ether phospholipids. This is Alkyldihydroxyacetonephosphate synthase (eapA) from Dictyostelium discoideum (Social amoeba).